We begin with the raw amino-acid sequence, 317 residues long: L-lactate dehydrogenase (317 aa).

Val16, Asp37, and Tyr69 together coordinate NAD(+). Residues Gln86, Arg92, and Asn124–Asp127 contribute to the substrate site. Residues Ala122–Asn124 and Ser147 each bind NAD(+). Residue Asp152 to Arg155 coordinates substrate. Catalysis depends on His179, which acts as the Proton acceptor. Phosphotyrosine is present on Tyr223. Thr232 is a substrate binding site.

Belongs to the LDH/MDH superfamily. LDH family. As to quaternary structure, homotetramer.

The protein resides in the cytoplasm. It carries out the reaction (S)-lactate + NAD(+) = pyruvate + NADH + H(+). It functions in the pathway fermentation; pyruvate fermentation to lactate; (S)-lactate from pyruvate: step 1/1. Its function is as follows. Catalyzes the conversion of lactate to pyruvate. This Mycoplasma capricolum subsp. capricolum (strain California kid / ATCC 27343 / NCTC 10154) protein is L-lactate dehydrogenase.